Reading from the N-terminus, the 530-residue chain is Arginine--tRNA ligase (530 aa).

Positions 113 to 123 (ANPTGPLHIGH) match the 'HIGH' region motif.

This sequence belongs to the class-I aminoacyl-tRNA synthetase family. In terms of assembly, monomer.

It is found in the cytoplasm. The catalysed reaction is tRNA(Arg) + L-arginine + ATP = L-arginyl-tRNA(Arg) + AMP + diphosphate. The sequence is that of Arginine--tRNA ligase from Campylobacter jejuni subsp. jejuni serotype O:6 (strain 81116 / NCTC 11828).